The following is a 275-amino-acid chain: Arylalkylamine N-acetyltransferase 1 (275 aa).

Residues 181 to 183 and 189 to 193 contribute to the acetyl-CoA site; these read LSV and GLGIA. Residues 181–254 enclose the N-acetyltransferase domain; the sequence is LSVDTNYRGL…GEVVFKPAAP (74 aa).

Belongs to the acetyltransferase family. AANAT subfamily. In terms of tissue distribution, in the adult, expressed in the midgut portion of the thoracic segments and the frontal half of the abdomen (at protein level). Expressed in the epithelial cell layer facing the lumen of the gut (at protein level). In the brain, expressed in a sub-populations of neurons and astrocytes, and in a set of distinct stripes in the optic lobes (at protein level). Expressed mainly in serotonergic neurons but also in subsets of glutamatergic, GABAergic and cholinergic neurons (at protein level).

It is found in the cytoplasm. It localises to the nucleus. The catalysed reaction is a 2-arylethylamine + acetyl-CoA = an N-acetyl-2-arylethylamine + CoA + H(+). The enzyme catalyses serotonin + acetyl-CoA = N-acetylserotonin + CoA + H(+). It carries out the reaction dopamine + acetyl-CoA = N-acetyldopamine + CoA + H(+). It catalyses the reaction tyramine + acetyl-CoA = N-acetyltyramine + CoA + H(+). The catalysed reaction is octopamine + acetyl-CoA = N-acetyloctopamine + CoA + H(+). The enzyme catalyses 5-methoxytryptamine + acetyl-CoA = melatonin + CoA + H(+). It carries out the reaction 2-phenylethylamine + acetyl-CoA = N-(2-phenylethyl)acetamide + CoA + H(+). It catalyses the reaction noradrenaline + acetyl-CoA = N-acetylnoradrenaline + CoA + H(+). The catalysed reaction is tyramine + butanoyl-CoA = N-butanoyltyramine + CoA + H(+). The enzyme catalyses tyramine + hexanoyl-CoA = N-hexanoyltyramine + CoA + H(+). It carries out the reaction tryptamine + acetyl-CoA = N-acetyltryptamine + CoA + H(+). It catalyses the reaction dopamine + hexadecanoyl-CoA = N-hexadecanoyl-dopamine + CoA + H(+). The catalysed reaction is dopamine + (9Z)-octadecenoyl-CoA = N-(9Z-octadecanoyl)-dopamine + CoA + H(+). The enzyme catalyses serotonin + hexadecanoyl-CoA = N-hexadecanoyl-serotonin + CoA + H(+). It carries out the reaction serotonin + (9Z)-octadecenoyl-CoA = N-(9Z-octadecenoyl)-serotonin + CoA + H(+). It catalyses the reaction serotonin + octadecanoyl-CoA = N-octadecanoyl-serotonin + CoA + H(+). The catalysed reaction is serotonin + (5Z,8Z,11Z,14Z)-eicosatetraenoyl-CoA = N-[(5Z,8Z,11Z,14Z)-eicosatetraenoyl]-serotonin + CoA + H(+). Its pathway is aromatic compound metabolism; melatonin biosynthesis; melatonin from serotonin: step 1/2. With respect to regulation, inhibited by long-chain acyl-CoA thioesters, oleoyl-CoA (an analog of acetyl-CoA) and tyrosol (an analog of tyramine). Functionally, catalyzes N-acetylation of tryptamine, tyramine, dopamine, serotonin and octopamine. In astrocytes, regulates sleep homeostasis by limiting the accumulation of serotonin and dopamine in the brain upon sleep deprivation. Is not essential for sclerotization. In Drosophila melanogaster (Fruit fly), this protein is Arylalkylamine N-acetyltransferase 1.